The primary structure comprises 235 residues: Chalcone--flavanone isomerase 2 (235 aa).

Residues Thr-50 and Ser-192 each contribute to the substrate site.

This sequence belongs to the chalcone isomerase family.

The enzyme catalyses a chalcone = a flavanone.. It participates in secondary metabolite biosynthesis; flavonoid biosynthesis. Catalyzes the intramolecular cyclization of bicyclic chalcones into tricyclic (S)-flavanones. Responsible for the isomerization of 4,2',4',6'-tetrahydroxychalcone (also termed chalcone) into naringenin. In Chrysanthemum morifolium (Florist's daisy), this protein is Chalcone--flavanone isomerase 2 (CHI2).